The sequence spans 27 residues: Ganodermin (27 aa).

Functionally, has antifungal activity against B.cinera, F.oxysporum and P.piricola with IC(50) values of 15.2 uM, 12.4 uM and 18.1 uM, respectively. Lacks hemagglutinating activity towards rabbit erythrocytes. Lacks deoxyribonuclease, ribonuclease and protease inhibitory activities. This Ganoderma lucidum (Ling zhi medicinal fungus) protein is Ganodermin.